We begin with the raw amino-acid sequence, 900 residues long: Exosome complex component 10 homolog (900 aa).

2 disordered regions span residues 1-31 (MPRT…SEDV) and 147-174 (TSIE…TGTP). Residues 8-28 (VHQEAKEESAQADQPPKKSAS) show a composition bias toward basic and acidic residues. In terms of domain architecture, 3'-5' exonuclease spans 273–438 (VVDTVEKLKQ…YVYGRMTNDL (166 aa)). 4 residues coordinate Mg(2+): Asp296, Glu298, Asp354, and Asp423. The HRDC domain occupies 485–565 (DNRQLYALRG…LKARDQPLVK (81 aa)). The tract at residues 731–900 (EQLKRKHPQA…FSNVRKEGKK (170 aa)) is disordered. Positions 809–826 (RKQKKNQFQRGFKAKNRG) are enriched in basic residues. Residues 878–887 (NNRNNKQFNK) are compositionally biased toward low complexity.

Belongs to the exosome component 10/RRP6 family. As to quaternary structure, component of the RNA exosome complex. Interacts with spn-A/Rad51; the interaction is required for the recruitment of spn-A to the DNA-damage response foci. Interacts with Su(var)3-9, a heterochromatin factor; the interaction promotes association of Rrp6 with a subset of genomic loci. Interacts with Su(var)205, a heterochromatin factor. Interacts with HDAC1, a heterochromatin factor. The cofactor is Mg(2+). In terms of tissue distribution, salivary gland (at protein level).

It is found in the nucleus. Its subcellular location is the chromosome. The protein localises to the cytoplasm. The protein resides in the cell cortex. It localises to the cytoskeleton. It is found in the microtubule organizing center. Its subcellular location is the centrosome. The protein localises to the spindle. The protein resides in the midbody. In terms of biological role, catalytic component of the RNA exosome complex which has 3'-&gt;5' exoribonuclease activity and participates in a multitude of cellular RNA processing and degradation events. Degrades a large variety of non-coding RNAs that are processed by the exosome, such as pre-rRNAs and some small nucleolar RNAs (snoRNAs). Degrades transcripts derived from different types of heterochromatic repeats, such as subtelomeric minisatellites and simple gagaa repeats. Degrades transcripts derived from transposons and transposon fragments. Degrades chromatin-associated transcripts and contributes to the compaction of heterochromatin. Required for the efficient repair of DNA double-strand breaks via homologous recombination after irradiation. Required for cell proliferation and error-free mitosis. The chain is Exosome complex component 10 homolog from Drosophila melanogaster (Fruit fly).